A 94-amino-acid polypeptide reads, in one-letter code: CRISPR-associated endoribonuclease Cas2 (94 aa).

The protein belongs to the CRISPR-associated endoribonuclease Cas2 protein family. E.coli-subtype subfamily. In terms of assembly, homodimer. Part of the Cas1-Cas2 complex. Forms a hexamer with 2 Cas1 dimers sandwiching a Cas2 dimer. The DNA lies across a flat surface extending from 1 Cas1 dimer, across the Cas2 dimer and contacting the other Cas1 dimer. Only 1 Cas1 protein from each dimer is catalytic, the other interacts with the Cas2 dimer and possibly target DNA.

CRISPR (clustered regularly interspaced short palindromic repeat), is an adaptive immune system that provides protection against mobile genetic elements (viruses, transposable elements and conjugative plasmids). CRISPR clusters contain sequences complementary to antecedent mobile elements and target invading nucleic acids. CRISPR clusters are transcribed and processed into CRISPR RNA (crRNA). The Cas1-Cas2 complex is involved in CRISPR adaptation, the first stage of CRISPR immunity, being required for the addition/removal of CRISPR spacers at the leader end of the CRISPR locus. The Cas1-Cas2 complex introduces staggered nicks into both strands of the CRISPR array near the leader repeat and joins the 5'-ends of the repeat strands with the 3'-ends of the new spacer sequence. Spacer DNA integration requires supercoiled target DNA and 3'-OH ends on the inserted (spacer) DNA and probably initiates with a nucleophilic attack of the C 3'-OH end of the protospacer on the minus strand of the first repeat sequence. Expression of Cas1-Cas2 in a strain lacking both genes permits spacer acquisition. Cas2 not seen to bind DNA alone; the Cas1-Cas2 complex preferentially binds CRISPR-locus DNA. Highest binding is seen to a dual forked DNA complex with 3'-overhangs and a protospacer-adjacent motif-complement specifically positioned. The protospacer DNA lies across a flat surface extending from 1 Cas1 dimer, across the Cas2 dimer and contacting the other Cas1 dimer; the 23 bp-long ds section of the DNA is bracketed by 1 Tyr-22 from each of the Cas1 dimers. Cas1 cuts within the 3'-overhang, to generate a 33-nucleotide DNA that is probably incorporated into the CRISPR leader by a cut-and-paste mechanism. This subunit's probable nuclease activity is not required for spacer acquisition. This is CRISPR-associated endoribonuclease Cas2 (ygbF) from Escherichia coli (strain K12).